The sequence spans 417 residues: UDP-N-acetylglucosamine 1-carboxyvinyltransferase (417 aa).

A phosphoenolpyruvate-binding site is contributed by 22–23 (KN). Residue arginine 91 participates in UDP-N-acetyl-alpha-D-glucosamine binding. The active-site Proton donor is cysteine 115. At cysteine 115 the chain carries 2-(S-cysteinyl)pyruvic acid O-phosphothioketal. UDP-N-acetyl-alpha-D-glucosamine is bound by residues 120-124 (RPVDL), aspartate 304, and isoleucine 326.

This sequence belongs to the EPSP synthase family. MurA subfamily.

It is found in the cytoplasm. The catalysed reaction is phosphoenolpyruvate + UDP-N-acetyl-alpha-D-glucosamine = UDP-N-acetyl-3-O-(1-carboxyvinyl)-alpha-D-glucosamine + phosphate. The protein operates within cell wall biogenesis; peptidoglycan biosynthesis. In terms of biological role, cell wall formation. Adds enolpyruvyl to UDP-N-acetylglucosamine. This is UDP-N-acetylglucosamine 1-carboxyvinyltransferase from Nitratidesulfovibrio vulgaris (strain DP4) (Desulfovibrio vulgaris).